Here is a 505-residue protein sequence, read N- to C-terminus: Maturase K (505 aa).

Belongs to the intron maturase 2 family. MatK subfamily.

The protein localises to the plastid. Its subcellular location is the chloroplast. Functionally, usually encoded in the trnK tRNA gene intron. Probably assists in splicing its own and other chloroplast group II introns. This is Maturase K from Coffea arabica (Arabian coffee).